A 171-amino-acid polypeptide reads, in one-letter code: 3-hydroxydecanoyl-[acyl-carrier-protein] dehydratase (171 aa).

Histidine 70 is a catalytic residue.

This sequence belongs to the thioester dehydratase family. FabA subfamily. In terms of assembly, homodimer.

Its subcellular location is the cytoplasm. It carries out the reaction a (3R)-hydroxyacyl-[ACP] = a (2E)-enoyl-[ACP] + H2O. The enzyme catalyses (3R)-hydroxydecanoyl-[ACP] = (2E)-decenoyl-[ACP] + H2O. The catalysed reaction is (2E)-decenoyl-[ACP] = (3Z)-decenoyl-[ACP]. It functions in the pathway lipid metabolism; fatty acid biosynthesis. In terms of biological role, necessary for the introduction of cis unsaturation into fatty acids. Catalyzes the dehydration of (3R)-3-hydroxydecanoyl-ACP to E-(2)-decenoyl-ACP and then its isomerization to Z-(3)-decenoyl-ACP. Can catalyze the dehydratase reaction for beta-hydroxyacyl-ACPs with saturated chain lengths up to 16:0, being most active on intermediate chain length. The protein is 3-hydroxydecanoyl-[acyl-carrier-protein] dehydratase of Shewanella sp. (strain ANA-3).